The sequence spans 216 residues: uncharacterized protein (216 aa).

This is an uncharacterized protein from Archaeoglobus fulgidus (strain ATCC 49558 / DSM 4304 / JCM 9628 / NBRC 100126 / VC-16).